A 177-amino-acid polypeptide reads, in one-letter code: Inner membrane-spanning protein YciB (177 aa).

A run of 5 helical transmembrane segments spans residues 22–42 (IFIASGSLIVISGLICIIHWI), 50–70 (ISLFSFLSVFFFGSLTIFFHN), 76–96 (WKITIIYIIFSLVLLISQFFT), 121–141 (FIWSLFFLFCAILNIYIAYYF), and 149–169 (FKVFGFTSLTFFLILITSIYI).

The protein belongs to the YciB family.

The protein resides in the cell inner membrane. In terms of biological role, plays a role in cell envelope biogenesis, maintenance of cell envelope integrity and membrane homeostasis. In Buchnera aphidicola subsp. Acyrthosiphon pisum (strain 5A), this protein is Inner membrane-spanning protein YciB.